Here is a 139-residue protein sequence, read N- to C-terminus: MKKGTVLNSELSALISRLGHTDSVTVGDAGLPVPDGIQRIDLALTHGIPRFMQVIETMTAEMQVERAVLAQEMVEANPDIHRQLVTWLQRLAQTQGNAIHIDYVSHGQFKALSGESKAIVRSGECSPYANVLLYAGVTF.

His20 acts as the Proton donor in catalysis. Residues Asp28, His106, and 128 to 130 contribute to the substrate site; that span reads YAN.

The protein belongs to the RbsD / FucU family. RbsD subfamily. Homodecamer.

Its subcellular location is the cytoplasm. It catalyses the reaction beta-D-ribopyranose = beta-D-ribofuranose. Its pathway is carbohydrate metabolism; D-ribose degradation; D-ribose 5-phosphate from beta-D-ribopyranose: step 1/2. In terms of biological role, catalyzes the interconversion of beta-pyran and beta-furan forms of D-ribose. The sequence is that of D-ribose pyranase from Edwardsiella ictaluri (strain 93-146).